Consider the following 526-residue polypeptide: Bifunctional purine biosynthesis protein PurH (526 aa).

In terms of domain architecture, MGS-like spans 1–147; it reads MSVIKRALIS…KNWKHVAIVT (147 aa).

This sequence belongs to the PurH family.

It catalyses the reaction (6R)-10-formyltetrahydrofolate + 5-amino-1-(5-phospho-beta-D-ribosyl)imidazole-4-carboxamide = 5-formamido-1-(5-phospho-D-ribosyl)imidazole-4-carboxamide + (6S)-5,6,7,8-tetrahydrofolate. The enzyme catalyses IMP + H2O = 5-formamido-1-(5-phospho-D-ribosyl)imidazole-4-carboxamide. Its pathway is purine metabolism; IMP biosynthesis via de novo pathway; 5-formamido-1-(5-phospho-D-ribosyl)imidazole-4-carboxamide from 5-amino-1-(5-phospho-D-ribosyl)imidazole-4-carboxamide (10-formyl THF route): step 1/1. The protein operates within purine metabolism; IMP biosynthesis via de novo pathway; IMP from 5-formamido-1-(5-phospho-D-ribosyl)imidazole-4-carboxamide: step 1/1. This Neisseria gonorrhoeae (strain NCCP11945) protein is Bifunctional purine biosynthesis protein PurH.